The primary structure comprises 473 residues: Cysteine--tRNA ligase (473 aa).

C30 lines the Zn(2+) pocket. Residues 32 to 42 (MTVYDYCHIGH) carry the 'HIGH' region motif. Residues C213, H238, and E242 each coordinate Zn(2+). A 'KMSKS' region motif is present at residues 270–274 (KMSKS). Residue K273 coordinates ATP.

This sequence belongs to the class-I aminoacyl-tRNA synthetase family. In terms of assembly, monomer. Requires Zn(2+) as cofactor.

It localises to the cytoplasm. The catalysed reaction is tRNA(Cys) + L-cysteine + ATP = L-cysteinyl-tRNA(Cys) + AMP + diphosphate. This Acinetobacter baumannii (strain AB307-0294) protein is Cysteine--tRNA ligase.